A 480-amino-acid polypeptide reads, in one-letter code: Glycogen synthase (480 aa).

The protein belongs to the glycosyltransferase 1 family. Bacterial/plant glycogen synthase subfamily.

It carries out the reaction [(1-&gt;4)-alpha-D-glucosyl](n) + ADP-alpha-D-glucose = [(1-&gt;4)-alpha-D-glucosyl](n+1) + ADP + H(+). Its pathway is glycan biosynthesis; glycogen biosynthesis. Functionally, synthesizes alpha-1,4-glucan chains using ADP-glucose. This Rhizobium etli (strain ATCC 51251 / DSM 11541 / JCM 21823 / NBRC 15573 / CFN 42) protein is Glycogen synthase.